The sequence spans 91 residues: uncharacterized protein (91 aa).

3 consecutive transmembrane segments (helical) span residues A6–F26, M37–I57, and I68–L88.

The protein resides in the cell membrane. This is an uncharacterized protein from Bacillus subtilis (strain 168).